Here is a 266-residue protein sequence, read N- to C-terminus: Putative carbamate hydrolase RutD (266 aa).

It belongs to the AB hydrolase superfamily. Hydrolase RutD family.

It carries out the reaction carbamate + 2 H(+) = NH4(+) + CO2. In terms of biological role, involved in pyrimidine catabolism. May facilitate the hydrolysis of carbamate, a reaction that can also occur spontaneously. The chain is Putative carbamate hydrolase RutD from Escherichia coli O139:H28 (strain E24377A / ETEC).